The sequence spans 145 residues: D-aminoacyl-tRNA deacylase (145 aa).

The Gly-cisPro motif, important for rejection of L-amino acids motif lies at 137–138 (GP).

Belongs to the DTD family. In terms of assembly, homodimer.

The protein localises to the cytoplasm. It carries out the reaction glycyl-tRNA(Ala) + H2O = tRNA(Ala) + glycine + H(+). It catalyses the reaction a D-aminoacyl-tRNA + H2O = a tRNA + a D-alpha-amino acid + H(+). Its function is as follows. An aminoacyl-tRNA editing enzyme that deacylates mischarged D-aminoacyl-tRNAs. Also deacylates mischarged glycyl-tRNA(Ala), protecting cells against glycine mischarging by AlaRS. Acts via tRNA-based rather than protein-based catalysis; rejects L-amino acids rather than detecting D-amino acids in the active site. By recycling D-aminoacyl-tRNA to D-amino acids and free tRNA molecules, this enzyme counteracts the toxicity associated with the formation of D-aminoacyl-tRNA entities in vivo and helps enforce protein L-homochirality. The polypeptide is D-aminoacyl-tRNA deacylase (Carboxydothermus hydrogenoformans (strain ATCC BAA-161 / DSM 6008 / Z-2901)).